A 91-amino-acid polypeptide reads, in one-letter code: DNA-directed RNA polymerase subunit Rpo5 (91 aa).

The protein belongs to the archaeal Rpo5/eukaryotic RPB5 RNA polymerase subunit family. Part of the RNA polymerase complex.

The protein resides in the cytoplasm. The enzyme catalyses RNA(n) + a ribonucleoside 5'-triphosphate = RNA(n+1) + diphosphate. Functionally, DNA-dependent RNA polymerase (RNAP) catalyzes the transcription of DNA into RNA using the four ribonucleoside triphosphates as substrates. The sequence is that of DNA-directed RNA polymerase subunit Rpo5 from Staphylothermus marinus (strain ATCC 43588 / DSM 3639 / JCM 9404 / F1).